The following is a 322-amino-acid chain: Gluconeogenesis factor (322 aa).

Belongs to the gluconeogenesis factor family.

It is found in the cytoplasm. In terms of biological role, required for morphogenesis under gluconeogenic growth conditions. This chain is Gluconeogenesis factor, found in Listeria monocytogenes serovar 1/2a (strain ATCC BAA-679 / EGD-e).